Consider the following 283-residue polypeptide: Protein FAM78A (283 aa).

Belongs to the FAM78 family.

The polypeptide is Protein FAM78A (Fam78a) (Mus musculus (Mouse)).